Here is a 180-residue protein sequence, read N- to C-terminus: Putative methyltransferase YrhH (180 aa).

It belongs to the methyltransferase superfamily.

The polypeptide is Putative methyltransferase YrhH (yrhH) (Bacillus subtilis (strain 168)).